The primary structure comprises 502 residues: Glycerol kinase (502 aa).

T12 contributes to the ADP binding site. Residues T12, T13, and S14 each contribute to the ATP site. T12 contributes to the sn-glycerol 3-phosphate binding site. Residue R16 participates in ADP binding. 4 residues coordinate sn-glycerol 3-phosphate: R82, E83, Y134, and D243. Positions 82, 83, 134, 243, and 244 each coordinate glycerol. ADP is bound by residues T265 and G308. The ATP site is built by T265, G308, Q312, and G412. G412 lines the ADP pocket.

This sequence belongs to the FGGY kinase family.

The enzyme catalyses glycerol + ATP = sn-glycerol 3-phosphate + ADP + H(+). It participates in polyol metabolism; glycerol degradation via glycerol kinase pathway; sn-glycerol 3-phosphate from glycerol: step 1/1. Its activity is regulated as follows. Inhibited by fructose 1,6-bisphosphate (FBP). In terms of biological role, key enzyme in the regulation of glycerol uptake and metabolism. Catalyzes the phosphorylation of glycerol to yield sn-glycerol 3-phosphate. The protein is Glycerol kinase of Methylobacterium nodulans (strain LMG 21967 / CNCM I-2342 / ORS 2060).